The following is a 287-amino-acid chain: MAIRTFRPYTPGTRTRVVTDFSEVTGRKPERSLVVSKHRRKGRNNRGVITCRHRGGGHKRQYRLVDFRRNKHGVTAKVAAIHYDPHRNARLALLFYADGEKRYILAPAGISIGQTVVSGTEVPIEIGNAMPLSAIPLGSSVHCVELYAGRGGQMVRTAGASAQVMAKEGDYVALKLPSTEVRLVRRECFATLGEVGNAEIRNTSLGKAGRRRWLGRRPQVRGSVMNPCDHPHGGGEGRAPIGRSGPVTPWGKPALGLKTRKRNKPSNKFVLRKRRKTSKRSRGGRDS.

Residues 221 to 287 (RGSVMNPCDH…SKRSRGGRDS (67 aa)) are disordered. Over residues 258–287 (KTRKRNKPSNKFVLRKRRKTSKRSRGGRDS) the composition is skewed to basic residues.

Belongs to the universal ribosomal protein uL2 family. As to quaternary structure, part of the 50S ribosomal subunit. Forms a bridge to the 30S subunit in the 70S ribosome.

Its function is as follows. One of the primary rRNA binding proteins. Required for association of the 30S and 50S subunits to form the 70S ribosome, for tRNA binding and peptide bond formation. It has been suggested to have peptidyltransferase activity; this is somewhat controversial. Makes several contacts with the 16S rRNA in the 70S ribosome. The polypeptide is Large ribosomal subunit protein uL2 (Synechococcus sp. (strain CC9311)).